The chain runs to 147 residues: Transcriptional repressor NrdR (147 aa).

Residues 3-34 (CPFCGHLETQVVETRVSEDADFVRRRRQCSAC) fold into a zinc finger. An ATP-cone domain is found at 49 to 139 (PVVVKKDGSR…VYRSFEDVDE (91 aa)).

The protein belongs to the NrdR family. Zn(2+) serves as cofactor.

Negatively regulates transcription of bacterial ribonucleotide reductase nrd genes and operons by binding to NrdR-boxes. The sequence is that of Transcriptional repressor NrdR from Variovorax paradoxus (strain S110).